The sequence spans 163 residues: MMDPIKTYEIKEEELAKTAYATIKTNKGNIALELFYKDAPQAVSNFVTLAKEGFYNGLNFHRVIAGFVAQGGCPYGTGTGGPGHRIKCEVAHNPNKHKRGSISMAHAGRDTGGSQFFLCFVDLPHLDGEHTVFGKITSAEGLSVLDKIKQGDIIESVVFSSSL.

The region spanning 17–163 (KTAYATIKTN…IESVVFSSSL (147 aa)) is the PPIase cyclophilin-type domain.

This sequence belongs to the cyclophilin-type PPIase family.

It carries out the reaction [protein]-peptidylproline (omega=180) = [protein]-peptidylproline (omega=0). Functionally, PPIases accelerate the folding of proteins. It catalyzes the cis-trans isomerization of proline imidic peptide bonds in oligopeptides. This Helicobacter pylori (strain ATCC 700392 / 26695) (Campylobacter pylori) protein is Peptidyl-prolyl cis-trans isomerase (ppiA).